Consider the following 1588-residue polypeptide: Autotransporter adhesin EhaG (1588 aa).

The signal sequence occupies residues 1–53; the sequence is MNKIFKVIWNPATGNYTVTSETAKSRGKKSGRSKLLISALVAGGMLSSFGALA. The segment at 54–1499 is surface exposed passenger domain; the sequence is NAGNDNGQGV…QETKQYTDQR (1446 aa). The interval 1500–1588 is translocator domain; sequence MVEMDNKLSK…SAALGAGIQW (89 aa). A run of 4 beta stranded transmembrane segments spans residues 1534–1544, 1548–1558, 1567–1573, and 1577–1588; these read GASMASIGGGT, ESAVALGVSMV, KLQGSTN, and EYSAALGAGIQW.

Belongs to the autotransporter-2 (AT-2) (TC 1.B.40) family. Homotrimer.

Its subcellular location is the cell surface. It localises to the cell outer membrane. Mediates aggregation, biofilm formation and adhesion to a range of extracellular matrix (ECM) proteins, such as fibronectin, fibrinogen, laminin and collagen types I, II, III, and V. Mediates adhesion to intestinal epithelial cells. This is Autotransporter adhesin EhaG from Escherichia coli O157:H7.